The sequence spans 203 residues: Glycerol-3-phosphate acyltransferase (203 aa).

Helical transmembrane passes span 3–23 (LASA…AILV), 75–95 (LGLE…GHLF), 113–133 (VILG…LIVA), and 156–176 (LLTG…LIYW).

It belongs to the PlsY family. In terms of assembly, probably interacts with PlsX.

It is found in the cell inner membrane. The enzyme catalyses an acyl phosphate + sn-glycerol 3-phosphate = a 1-acyl-sn-glycero-3-phosphate + phosphate. Its pathway is lipid metabolism; phospholipid metabolism. Its function is as follows. Catalyzes the transfer of an acyl group from acyl-phosphate (acyl-PO(4)) to glycerol-3-phosphate (G3P) to form lysophosphatidic acid (LPA). This enzyme utilizes acyl-phosphate as fatty acyl donor, but not acyl-CoA or acyl-ACP. The sequence is that of Glycerol-3-phosphate acyltransferase from Thioalkalivibrio sulfidiphilus (strain HL-EbGR7).